The primary structure comprises 493 residues: UDP-N-acetylmuramoyl-L-alanyl-D-glutamate--2,6-diaminopimelate ligase (493 aa).

UDP-N-acetyl-alpha-D-muramoyl-L-alanyl-D-glutamate is bound at residue Ser-31. 111 to 117 lines the ATP pocket; sequence GTNGKTT. Residues Asn-152, 153–154, Ser-180, and Arg-188 contribute to the UDP-N-acetyl-alpha-D-muramoyl-L-alanyl-D-glutamate site; that span reads TT. Residue Lys-220 is modified to N6-carboxylysine. Meso-2,6-diaminopimelate is bound by residues Arg-386, 410-413, Gly-462, and Glu-466; that span reads DNPR. Positions 410 to 413 match the Meso-diaminopimelate recognition motif motif; that stretch reads DNPR.

The protein belongs to the MurCDEF family. MurE subfamily. Mg(2+) serves as cofactor. In terms of processing, carboxylation is probably crucial for Mg(2+) binding and, consequently, for the gamma-phosphate positioning of ATP.

The protein resides in the cytoplasm. It carries out the reaction UDP-N-acetyl-alpha-D-muramoyl-L-alanyl-D-glutamate + meso-2,6-diaminopimelate + ATP = UDP-N-acetyl-alpha-D-muramoyl-L-alanyl-gamma-D-glutamyl-meso-2,6-diaminopimelate + ADP + phosphate + H(+). It participates in cell wall biogenesis; peptidoglycan biosynthesis. In terms of biological role, catalyzes the addition of meso-diaminopimelic acid to the nucleotide precursor UDP-N-acetylmuramoyl-L-alanyl-D-glutamate (UMAG) in the biosynthesis of bacterial cell-wall peptidoglycan. This chain is UDP-N-acetylmuramoyl-L-alanyl-D-glutamate--2,6-diaminopimelate ligase (murE1), found in Oceanobacillus iheyensis (strain DSM 14371 / CIP 107618 / JCM 11309 / KCTC 3954 / HTE831).